The primary structure comprises 91 residues: UPF0250 protein NGK_1021 (91 aa).

The protein belongs to the UPF0250 family.

This chain is UPF0250 protein NGK_1021, found in Neisseria gonorrhoeae (strain NCCP11945).